The chain runs to 253 residues: Imidazole glycerol phosphate synthase subunit HisF (253 aa).

Active-site residues include Asp-11 and Asp-130.

It belongs to the HisA/HisF family. Heterodimer of HisH and HisF.

The protein localises to the cytoplasm. It carries out the reaction 5-[(5-phospho-1-deoxy-D-ribulos-1-ylimino)methylamino]-1-(5-phospho-beta-D-ribosyl)imidazole-4-carboxamide + L-glutamine = D-erythro-1-(imidazol-4-yl)glycerol 3-phosphate + 5-amino-1-(5-phospho-beta-D-ribosyl)imidazole-4-carboxamide + L-glutamate + H(+). It functions in the pathway amino-acid biosynthesis; L-histidine biosynthesis; L-histidine from 5-phospho-alpha-D-ribose 1-diphosphate: step 5/9. In terms of biological role, IGPS catalyzes the conversion of PRFAR and glutamine to IGP, AICAR and glutamate. The HisF subunit catalyzes the cyclization activity that produces IGP and AICAR from PRFAR using the ammonia provided by the HisH subunit. In Methylibium petroleiphilum (strain ATCC BAA-1232 / LMG 22953 / PM1), this protein is Imidazole glycerol phosphate synthase subunit HisF.